The following is a 476-amino-acid chain: Growth/differentiation factor 10 (476 aa).

Residues 1–29 (MAPGLARISLRSQLLPLVPLLLLLRGAGC) form the signal peptide. Positions 30 to 366 (GHRVPSWSSL…EKTMQKARRR (337 aa)) are excised as a propeptide. N-linked (GlcNAc...) asparagine glycosylation is found at Asn114, Asn152, and Asn277. Disordered regions lie at residues 268–305 (GDFE…LDER) and 330–358 (PRTG…FDEK). 3 disulfide bridges follow: Cys374-Cys441, Cys403-Cys473, and Cys407-Cys475. N-linked (GlcNAc...) asparagine glycosylation occurs at Asn467.

The protein belongs to the TGF-beta family. Homodimer or heterodimer. Can form a non-covalent complex of the mature region and the pro-region. Costa, costicartilage, femur, calvaria, trachea, aorta and brain. Predominantly in the cerebellum.

Its subcellular location is the secreted. Functionally, growth factor involved in osteogenesis and adipogenesis. Plays an inhibitory role in the process of osteoblast differentiation via SMAD2/3 pathway. Plays an inhibitory role in the process of adipogenesis. In Rattus norvegicus (Rat), this protein is Growth/differentiation factor 10.